Consider the following 225-residue polypeptide: UPF0758 protein XCV4028 (225 aa).

The 123-residue stretch at 102 to 224 (ALSDPPSVGR…PVSFAERGWL (123 aa)) folds into the MPN domain. Zn(2+) is bound by residues H173, H175, and D186. Residues 173–186 (HNHPSGNPEPSEAD) carry the JAMM motif motif.

Belongs to the UPF0758 family.

The protein is UPF0758 protein XCV4028 of Xanthomonas euvesicatoria pv. vesicatoria (strain 85-10) (Xanthomonas campestris pv. vesicatoria).